We begin with the raw amino-acid sequence, 1415 residues long: MIFYNRVINKGQLKKLISWSFNNYGTAITAQMANKLKDLGFRYATKAGVSISVDDLQVPPSKRQLLDEAEQEIRNTTERYTKGKITEVERFQKVIDTWNSTSENLKNEVVRNFRSTDPLNSVYMMAFSGARGNISQVRQLVGMRGLMADPQGEIIDLPIKTNFREGLTVTEYIISSYGARKGLVDTALRTADSGYLTRRLVDVSQDVIVREADCGTKRGVMVTSMKDGDRVLIPVKDRLLGRVLADDVKDPKTGEIVTQGHIQAVKNQVLTEDLAKAIGKAGVENVFVRSPLTCESPRSVCQTCYGWSLAHGHMVDMGEAIGIIAAQSIGEPGTQLTMRTFHTGGVFTGEVARQFVASFGGVVKYPSNVRTRSFRTRHGDEAMIAENNFDMIILGVDGRKETIPIAQGSILMVQNNQQVSAGIVLAEVPKVGQVRKTTEKVTKEVASDLAGELKFAQLVQEEKVDKQGTTTRIAQRGGLIWILEGEVYNLPPGAEAMVKNGTRININSVLAETKLVTEHGGVIRISSSPLYSPEKQNETNVLAQATQESTIDELEASMTGTSAQLPINTEMPDNLPREIEVITASVRLDQAKVRLESISNREQYIIETQNDQRFALKVTPGSKVGNHEVIAELLDENYQTSTGGIIKYAGVEVLKRGKAKQGYEVVKGGTLLWIPEECHEVNKDISLLLVEDGQYVEAGTEIVKDIFCQSNGVTEVHQKNDILREVVIKPGKLHSGNYEIDLGDLTLMDGQIATPGEEVIPGLVTSELKYIEYIETPEGPGLLLRPVTEFHVPDEPGVPSQKSINSSIELRAVQRIPFKDGERVKSVEGIELLRTQLVLEIGEEAPQLAADIELLPDLEEEGIMRLQLVILESLVIRRDVVADTTQGSTSTRLLVKDGDVIEAGGVVSRTQILSKKSGEVRGIREGSEAIRRILIVREADLVKIPVNTLPSVVEGDLLVAGTEIAPGIVIPRSGLVSKVEETVLNDGSKGYQVILRKGRPYRVSTGAVLLTMDGDLVQRGDILVLLVFERTKTGDIIQGLPRIEELLEARKPKESCILVKYPGQAQVNVNDDNVEVSVVSSDGTITDYPLGHGQNVIVADGQNVNVGEALTDGPQNPHEILETFFNYYREHESAYEACLRSFEACQRFLVNQVQAVYQSQGIDISDKHIEVIVRQMTAKVRIDDGGDTTMLPGELIELRQVEQVNEAMSITGGATAQYTPMLLGITKASLNTDSFISAASFQETTRVLTEAAIEGKSDWLRGLKENVIIGRLIPAGTGFNAYEDALSAEINRLEQNWDDDLDIFEEGDLQSVVLDDQTARSLEFENSLNLSSANQNFVDSQGKPQSQSSFIDDSMSEFSPVKDKSGSVLDDSDFPPGNFDSDFPADNYDLEHEIDLEDDVYDGYDDFDENTPDLI.

Residues C214, C294, C301, and C304 each coordinate Zn(2+). Polar residues predominate over residues 1335–1351 (QNFVDSQGKPQSQSSFI). Residues 1335-1390 (QNFVDSQGKPQSQSSFIDDSMSEFSPVKDKSGSVLDDSDFPPGNFDSDFPADNYDL) form a disordered region.

The protein belongs to the RNA polymerase beta' chain family. RpoC2 subfamily. In cyanobacteria the RNAP catalytic core is composed of 2 alpha, 1 beta, 1 beta', 1 gamma and 1 omega subunit. When a sigma factor is associated with the core the holoenzyme is formed, which can initiate transcription. Zn(2+) is required as a cofactor.

The catalysed reaction is RNA(n) + a ribonucleoside 5'-triphosphate = RNA(n+1) + diphosphate. In terms of biological role, DNA-dependent RNA polymerase catalyzes the transcription of DNA into RNA using the four ribonucleoside triphosphates as substrates. This Trichodesmium erythraeum (strain IMS101) protein is DNA-directed RNA polymerase subunit beta'.